The primary structure comprises 321 residues: Flagellin C (321 aa).

The protein belongs to the bacterial flagellin family.

The protein resides in the secreted. The protein localises to the bacterial flagellum. In terms of biological role, flagellin is the subunit protein which polymerizes to form the filaments of bacterial flagella. This Rhizobium meliloti (strain 1021) (Ensifer meliloti) protein is Flagellin C (flaC).